Consider the following 333-residue polypeptide: Taste receptor type 2 member 123 (333 aa).

Residues 1 to 13 are Extracellular-facing; sequence MFSQKINYSHLFT. The N-linked (GlcNAc...) asparagine glycan is linked to N7. A helical membrane pass occupies residues 14-34; that stretch reads FSITLYVEIVTGILGHGFIAL. Over 35–60 the chain is Cytoplasmic; sequence VNIMDWVKRRRISSVDQILTALALTR. The chain crosses the membrane as a helical span at residues 61 to 81; sequence FIYVLSMLICILLFMLCPHLP. Topologically, residues 82 to 90 are extracellular; it reads RRSEMLSAM. Residues 91 to 111 form a helical membrane-spanning segment; that stretch reads GIFWVVNSHFSIWLTTCLGVF. Residues 112–134 lie on the Cytoplasmic side of the membrane; it reads YFLKIANFSNSFFLYLKWRVKKV. The chain crosses the membrane as a helical span at residues 135-155; it reads ILIIILASLIFLTLHILSLGI. At 156 to 205 the chain is on the extracellular side; sequence YDQFSIAAYVGNMSYSLTDLTQFSSTFLFSNSSNVFLITNSSHVFLPINS. N-linked (GlcNAc...) asparagine glycosylation is found at N167, N186, and N195. A helical membrane pass occupies residues 206–226; that stretch reads LFMLIPFTVSLVAFLMLIFSL. Topologically, residues 227-253 are cytoplasmic; that stretch reads WKHHKKMQVNAKQPRDVSTMAHIKALQ. A helical transmembrane segment spans residues 254 to 274; that stretch reads TVFSFLLLYAIYLLFLIIGIL. Residues 275-281 lie on the Extracellular side of the membrane; that stretch reads NLGLMEK. The chain crosses the membrane as a helical span at residues 282 to 302; sequence IVILIFDHISGAVFPISHSFV. Over 303–333 the chain is Cytoplasmic; it reads LILGNSKLRQASLSVLPCLRCQSKDMDTMGL.

The protein belongs to the G-protein coupled receptor T2R family. In terms of tissue distribution, expressed in subsets of taste receptor cells of the tongue and palate epithelium and exclusively in gustducin-positive cells. Expressed in the duodenum, antrum and fundus (part of the stomach).

The protein localises to the membrane. Functionally, gustducin-coupled receptor implicated in the perception of bitter compounds in the oral cavity and the gastrointestinal tract. Signals through PLCB2 and the calcium-regulated cation channel TRPM5. This is Taste receptor type 2 member 123 (Tas2r123) from Mus musculus (Mouse).